A 265-amino-acid chain; its full sequence is Pyrroline-5-carboxylate reductase (265 aa).

It belongs to the pyrroline-5-carboxylate reductase family.

It is found in the cytoplasm. It catalyses the reaction L-proline + NADP(+) = (S)-1-pyrroline-5-carboxylate + NADPH + 2 H(+). It carries out the reaction L-proline + NAD(+) = (S)-1-pyrroline-5-carboxylate + NADH + 2 H(+). It participates in amino-acid biosynthesis; L-proline biosynthesis; L-proline from L-glutamate 5-semialdehyde: step 1/1. Its function is as follows. Catalyzes the reduction of 1-pyrroline-5-carboxylate (PCA) to L-proline. In Aquifex aeolicus (strain VF5), this protein is Pyrroline-5-carboxylate reductase.